Reading from the N-terminus, the 844-residue chain is DNA mismatch repair protein MutS (844 aa).

602–609 (GPNMSGKS) serves as a coordination point for ATP.

It belongs to the DNA mismatch repair MutS family.

In terms of biological role, this protein is involved in the repair of mismatches in DNA. It is possible that it carries out the mismatch recognition step. This protein has a weak ATPase activity. The chain is DNA mismatch repair protein MutS from Streptococcus pneumoniae (strain ATCC 700669 / Spain 23F-1).